Reading from the N-terminus, the 249-residue chain is uncharacterized protein (249 aa).

A divalent metal cation contacts are provided by His10, His12, Glu95, His129, His150, and Asp198.

The protein belongs to the metallo-dependent hydrolases superfamily. TatD-type hydrolase family. Requires a divalent metal cation as cofactor.

This is an uncharacterized protein from Methanocaldococcus jannaschii (strain ATCC 43067 / DSM 2661 / JAL-1 / JCM 10045 / NBRC 100440) (Methanococcus jannaschii).